The chain runs to 274 residues: Orotidine 5'-phosphate decarboxylase (274 aa).

The Proton donor role is filled by lysine 95.

Belongs to the OMP decarboxylase family. Type 2 subfamily.

The catalysed reaction is orotidine 5'-phosphate + H(+) = UMP + CO2. The protein operates within pyrimidine metabolism; UMP biosynthesis via de novo pathway; UMP from orotate: step 2/2. This chain is Orotidine 5'-phosphate decarboxylase (pyrF), found in Mycobacterium bovis (strain ATCC BAA-935 / AF2122/97).